Here is an 842-residue protein sequence, read N- to C-terminus: Protein translocase subunit SecA (842 aa).

Residues Gln-85, 103 to 107, and Asp-493 each bind ATP; that span reads GEGKT. The Zn(2+) site is built by Cys-825, Cys-827, Cys-836, and His-837.

This sequence belongs to the SecA family. In terms of assembly, monomer and homodimer. Part of the essential Sec protein translocation apparatus which comprises SecA, SecYEG and auxiliary proteins SecDF. Other proteins may also be involved. Requires Zn(2+) as cofactor.

Its subcellular location is the cell membrane. It localises to the cytoplasm. It catalyses the reaction ATP + H2O + cellular proteinSide 1 = ADP + phosphate + cellular proteinSide 2.. Functionally, part of the Sec protein translocase complex. Interacts with the SecYEG preprotein conducting channel. Has a central role in coupling the hydrolysis of ATP to the transfer of proteins into and across the cell membrane, serving as an ATP-driven molecular motor driving the stepwise translocation of polypeptide chains across the membrane. In Streptococcus uberis (strain ATCC BAA-854 / 0140J), this protein is Protein translocase subunit SecA.